A 412-amino-acid polypeptide reads, in one-letter code: Alanyl-tRNA editing protein Aarsd1-A (412 aa).

Residues H108, H112, C208, and H212 each coordinate Zn(2+).

Belongs to the class-II aminoacyl-tRNA synthetase family. Alax-L subfamily. Requires Zn(2+) as cofactor.

The protein resides in the cytoplasm. Its function is as follows. Functions in trans to edit the amino acid moiety from incorrectly charged tRNA(Ala). This is Alanyl-tRNA editing protein Aarsd1-A (aarsd1-a) from Xenopus laevis (African clawed frog).